Here is a 271-residue protein sequence, read N- to C-terminus: Imidazole glycerol phosphate synthase subunit HisF (271 aa).

Catalysis depends on residues Asp-12 and Asp-136.

The protein belongs to the HisA/HisF family. Heterodimer of HisH and HisF.

The protein localises to the cytoplasm. The enzyme catalyses 5-[(5-phospho-1-deoxy-D-ribulos-1-ylimino)methylamino]-1-(5-phospho-beta-D-ribosyl)imidazole-4-carboxamide + L-glutamine = D-erythro-1-(imidazol-4-yl)glycerol 3-phosphate + 5-amino-1-(5-phospho-beta-D-ribosyl)imidazole-4-carboxamide + L-glutamate + H(+). Its pathway is amino-acid biosynthesis; L-histidine biosynthesis; L-histidine from 5-phospho-alpha-D-ribose 1-diphosphate: step 5/9. Functionally, IGPS catalyzes the conversion of PRFAR and glutamine to IGP, AICAR and glutamate. The HisF subunit catalyzes the cyclization activity that produces IGP and AICAR from PRFAR using the ammonia provided by the HisH subunit. The polypeptide is Imidazole glycerol phosphate synthase subunit HisF (Haloarcula marismortui (strain ATCC 43049 / DSM 3752 / JCM 8966 / VKM B-1809) (Halobacterium marismortui)).